Here is a 1190-residue protein sequence, read N- to C-terminus: DNA-directed RNA polymerase subunit beta (1190 aa).

It belongs to the RNA polymerase beta chain family. In terms of assembly, the RNAP catalytic core consists of 2 alpha, 1 beta, 1 beta' and 1 omega subunit. When a sigma factor is associated with the core the holoenzyme is formed, which can initiate transcription.

The enzyme catalyses RNA(n) + a ribonucleoside 5'-triphosphate = RNA(n+1) + diphosphate. DNA-dependent RNA polymerase catalyzes the transcription of DNA into RNA using the four ribonucleoside triphosphates as substrates. The chain is DNA-directed RNA polymerase subunit beta from Streptococcus suis (strain 98HAH33).